The following is a 109-amino-acid chain: T cell receptor alpha variable 26-1 (109 aa).

The signal sequence occupies residues 1-19 (MRLVARVTVFLTFGTIIDA). One can recognise an Ig-like domain in the interval 20 to 109 (KTTQPTSMDC…TAVYYCIVRV (90 aa)). Cysteine 39 and cysteine 105 are oxidised to a cystine. Asparagine 40 and asparagine 71 each carry an N-linked (GlcNAc...) asparagine glycan.

Alpha-beta TR is a heterodimer composed of an alpha and beta chain; disulfide-linked. The alpha-beta TR is associated with the transmembrane signaling CD3 coreceptor proteins to form the TR-CD3 (TcR or TCR). The assembly of alpha-beta TR heterodimers with CD3 occurs in the endoplasmic reticulum where a single alpha-beta TR heterodimer associates with one CD3D-CD3E heterodimer, one CD3G-CD3E heterodimer and one CD247 homodimer forming a stable octameric structure. CD3D-CD3E and CD3G-CD3E heterodimers preferentially associate with TR alpha and TR beta chains, respectively. The association of the CD247 homodimer is the last step of TcR assembly in the endoplasmic reticulum and is required for transport to the cell surface.

It is found in the cell membrane. V region of the variable domain of T cell receptor (TR) alpha chain that participates in the antigen recognition. Alpha-beta T cell receptors are antigen specific receptors which are essential to the immune response and are present on the cell surface of T lymphocytes. Recognize peptide-major histocompatibility (MH) (pMH) complexes that are displayed by antigen presenting cells (APC), a prerequisite for efficient T cell adaptive immunity against pathogens. Binding of alpha-beta TR to pMH complex initiates TR-CD3 clustering on the cell surface and intracellular activation of LCK that phosphorylates the ITAM motifs of CD3G, CD3D, CD3E and CD247 enabling the recruitment of ZAP70. In turn ZAP70 phosphorylates LAT, which recruits numerous signaling molecules to form the LAT signalosome. The LAT signalosome propagates signal branching to three major signaling pathways, the calcium, the mitogen-activated protein kinase (MAPK) kinase and the nuclear factor NF-kappa-B (NF-kB) pathways, leading to the mobilization of transcription factors that are critical for gene expression and essential for T cell growth and differentiation. The T cell repertoire is generated in the thymus, by V-(D)-J rearrangement. This repertoire is then shaped by intrathymic selection events to generate a peripheral T cell pool of self-MH restricted, non-autoaggressive T cells. Post-thymic interaction of alpha-beta TR with the pMH complexes shapes TR structural and functional avidity. This chain is T cell receptor alpha variable 26-1, found in Homo sapiens (Human).